The sequence spans 261 residues: Tyrosine phosphatase-like protein H5 (261 aa).

Residues 26–261 form the Tyrosine-protein phosphatase domain; that stretch reads LIKKEHDKVL…ESVEQEYFVP (236 aa).

The protein belongs to the protein-tyrosine phosphatase family.

This is Tyrosine phosphatase-like protein H5 (H6) from Microplitis demolitor bracovirus (isolate Webb) (MdBV).